The primary structure comprises 165 residues: uncharacterized protein (165 aa).

Residues 22 to 34 show a composition bias toward polar residues; the sequence is QQANQENMSSRTD. Residues 22 to 45 are disordered; it reads QQANQENMSSRTDSPIPPFGESEQ.

This is an uncharacterized protein from Homo sapiens (Human).